The following is a 676-amino-acid chain: Forkhead box protein biniou (676 aa).

Disordered stretches follow at residues 22–50 (YHDPRAHPPFSHPHAHSHPHQHTHTGHPY), 131–160 (AHSAGSASPQSNSKTPTDLPQDLQYASSST), 203–232 (QEQAGQQQPQQLPAQQLQHSPGGGYMSRIS), 249–312 (NYSS…PEKP), and 583–651 (IQHA…AYLP). Residues 34 to 48 (PHAHSHPHQHTHTGH) show a composition bias toward basic residues. A compositionally biased stretch (polar residues) spans 133-160 (SAGSASPQSNSKTPTDLPQDLQYASSST). Residues 203 to 220 (QEQAGQQQPQQLPAQQLQ) are compositionally biased toward low complexity. The segment covering 257–273 (PAKSLNGSESSPPSQNH) has biased composition (polar residues). Residues 311–408 (KPALSYINMI…DEGSLRRRPR (98 aa)) constitute a DNA-binding region (fork-head). Residues 583-593 (IQHAQAQAQAQ) show a composition bias toward low complexity. Residues 594 to 611 (AHHHHHQHHASHPSHSHQ) show a composition bias toward basic residues. The segment covering 612–625 (GHGSMHQNHGTSST) has biased composition (low complexity). A compositionally biased stretch (basic and acidic residues) spans 637–647 (GIDHSPIDRKP).

Binds to DNA. In terms of tissue distribution, in embryo, expressed in all types of visceral muscles and their progenitors (at protein level). In late stage 10 embryo, expressed in the caudal visceral mesoderm and trunk and hindgut visceral mesoderm progenitors.

It localises to the nucleus. Functionally, component of a regulatory network controlling visceral mesoderm development and midgut morphogenesis. Transcriptional regulator involved in the activation of a large number of genes in the visceral mesoderm including betaTub60D, dpp and Hand. Binds to and regulates a number of enhancers driving expression in the visceral mesoderm in a temporally and spatially restricted manner. Also to binds to enhancers cooperatively with activators, such as bap or HLH54F, to coregulate expression of shared target genes in the visceral mesoderm. Binds to the Ndg enhancer and drives expression of Ndg in the late visceral musculature. May be involved in the transcriptional regulation of wupA in the visceral mesoderm. Plays an indirect role in the later stages of salivary gland positioning. This chain is Forkhead box protein biniou (bin), found in Drosophila melanogaster (Fruit fly).